Consider the following 186-residue polypeptide: Elongation factor P (186 aa).

This sequence belongs to the elongation factor P family.

The protein localises to the cytoplasm. The protein operates within protein biosynthesis; polypeptide chain elongation. Its function is as follows. Involved in peptide bond synthesis. Stimulates efficient translation and peptide-bond synthesis on native or reconstituted 70S ribosomes in vitro. Probably functions indirectly by altering the affinity of the ribosome for aminoacyl-tRNA, thus increasing their reactivity as acceptors for peptidyl transferase. In Shewanella sp. (strain ANA-3), this protein is Elongation factor P.